A 67-amino-acid chain; its full sequence is Large ribosomal subunit protein bL31 (67 aa).

Zn(2+) is bound by residues Cys16, Cys18, Cys36, and Cys39.

Belongs to the bacterial ribosomal protein bL31 family. Type A subfamily. As to quaternary structure, part of the 50S ribosomal subunit. The cofactor is Zn(2+).

Functionally, binds the 23S rRNA. This Desulforudis audaxviator (strain MP104C) protein is Large ribosomal subunit protein bL31.